The sequence spans 405 residues: Na(+)/H(+) antiporter NhaA 1 (405 aa).

A run of 11 helical transmembrane segments spans residues 20–40 (FVSD…AMIV), 68–88 (LHLW…GLEV), 105–125 (LPVL…VGVV), 134–154 (GWAI…GLLG), 163–183 (LFLL…IAAF), 186–206 (ANLK…MVGM), 214–234 (IWPY…SGVH), 263–283 (GLAP…NAGV), 301–321 (IAAG…VAAV), 334–354 (WIEI…SLFI), and 371–391 (IGIL…LRLT).

This sequence belongs to the NhaA Na(+)/H(+) (TC 2.A.33) antiporter family.

It is found in the cell inner membrane. The catalysed reaction is Na(+)(in) + 2 H(+)(out) = Na(+)(out) + 2 H(+)(in). Functionally, na(+)/H(+) antiporter that extrudes sodium in exchange for external protons. This chain is Na(+)/H(+) antiporter NhaA 1, found in Erythrobacter litoralis (strain HTCC2594).